Consider the following 87-residue polypeptide: uncharacterized protein (87 aa).

Residues 13 to 33 (LMIVSAVFGGIGIITTIVFVI) traverse the membrane as a helical segment. A disordered region spans residues 66-87 (EECGGSTETSSSKPKKKAKKEV). The segment covering 78-87 (KPKKKAKKEV) has biased composition (basic residues).

Its subcellular location is the membrane. This is an uncharacterized protein from Caenorhabditis elegans.